Reading from the N-terminus, the 724-residue chain is Phosphoribosylformylglycinamidine synthase subunit PurL (724 aa).

His-34 is an active-site residue. The ATP site is built by Tyr-37 and Lys-75. Glu-77 is a binding site for Mg(2+). Residues 78 to 81 (SHNH) and Arg-100 each bind substrate. The Proton acceptor role is filled by His-79. Mg(2+) is bound at residue Asp-101. Gln-221 is a substrate binding site. Asp-249 provides a ligand contact to Mg(2+). 292-294 (ESQ) contributes to the substrate binding site. ATP-binding residues include Asp-478 and Gly-515. A substrate-binding site is contributed by Ser-518.

The protein belongs to the FGAMS family. In terms of assembly, monomer. Part of the FGAM synthase complex composed of 1 PurL, 1 PurQ and 2 PurS subunits.

The protein resides in the cytoplasm. It carries out the reaction N(2)-formyl-N(1)-(5-phospho-beta-D-ribosyl)glycinamide + L-glutamine + ATP + H2O = 2-formamido-N(1)-(5-O-phospho-beta-D-ribosyl)acetamidine + L-glutamate + ADP + phosphate + H(+). It participates in purine metabolism; IMP biosynthesis via de novo pathway; 5-amino-1-(5-phospho-D-ribosyl)imidazole from N(2)-formyl-N(1)-(5-phospho-D-ribosyl)glycinamide: step 1/2. In terms of biological role, part of the phosphoribosylformylglycinamidine synthase complex involved in the purines biosynthetic pathway. Catalyzes the ATP-dependent conversion of formylglycinamide ribonucleotide (FGAR) and glutamine to yield formylglycinamidine ribonucleotide (FGAM) and glutamate. The FGAM synthase complex is composed of three subunits. PurQ produces an ammonia molecule by converting glutamine to glutamate. PurL transfers the ammonia molecule to FGAR to form FGAM in an ATP-dependent manner. PurS interacts with PurQ and PurL and is thought to assist in the transfer of the ammonia molecule from PurQ to PurL. This is Phosphoribosylformylglycinamidine synthase subunit PurL from Caldivirga maquilingensis (strain ATCC 700844 / DSM 13496 / JCM 10307 / IC-167).